The following is a 119-amino-acid chain: Microtubule nucleation factor SSNA1 (119 aa).

The residue at position 2 (threonine 2) is an N-acetylthreonine. Positions 2 to 32 (TQQGAALQNYNNELVKCIEELCQKREELCRQ) are important for localization to the centrosome. The stretch at 13–70 (NELVKCIEELCQKREELCRQIQQEEDEKQRLQNEVRQLTEKLARVNENLARKIASRNE) forms a coiled coil.

This sequence belongs to the SSNA1 family. As to quaternary structure, self-associates to form fibrils. Also forms dimers as well as monomers. Interacts with SPAST.

Its subcellular location is the nucleus. The protein localises to the cytoplasm. The protein resides in the cytoskeleton. It is found in the microtubule organizing center. It localises to the centrosome. Its subcellular location is the centriole. The protein localises to the midbody. The protein resides in the flagellum basal body. It is found in the flagellum axoneme. It localises to the cell projection. Its subcellular location is the axon. Functionally, microtubule-binding protein which stabilizes dynamic microtubules by slowing growth and shrinkage at both plus and minus ends and serves as a sensor of microtubule damage, protecting microtubules from the microtubule-severing enzyme SPAST. Induces microtubule branching which is mediated by the formation of long SSNA1 fibrils which guide microtubule protofilaments to split apart from the mother microtubule and form daughter microtubules. Plays a role in axon outgrowth and branching. Required for cell division. This Mus musculus (Mouse) protein is Microtubule nucleation factor SSNA1.